The primary structure comprises 228 residues: Derlin-3 (228 aa).

The Cytoplasmic segment spans residues 1–22; that stretch reads MAGQRLAAGFLQVPAVTRAYTA. The helical transmembrane segment at 23–43 threads the bilayer; the sequence is ACVLTTAAVQLELLSPFQLYF. At 44–57 the chain is on the lumenal side; sequence NPHLVFRKFQVWRL. The helical transmembrane segment at 58 to 78 threads the bilayer; the sequence is ITTFLFFGPLGFGFFFNMLFV. At 79–98 the chain is on the cytoplasmic side; sequence FRYCRMLEEGSFRGRKADFV. Residues 99 to 119 traverse the membrane as a helical segment; that stretch reads FMFLFGGVLMTLLGFLGSLFF. Over 120–168 the chain is Lumenal; it reads LGQALMAMLVYVWSRRSPHVRVNFFGLLNFQAPFLPWALMGFSLLLGNS. Residues 169-189 traverse the membrane as a helical segment; that stretch reads VVTDLLGILVGHIYYFLEDVF. At 190–228 the chain is on the cytoplasmic side; that stretch reads PNQPGGKRLLLTPSVLKLLLDDPQEDPDYLPLPEEQPEL.

The protein belongs to the derlin family. As to quaternary structure, forms homo- and heterooligomers with DERL2 and, to a lesser extent, with DERL1. Interacts with VCP and EDEM1. Interacts with SELENOK and SELENOS. Interacts with the signal recognition particle/SRP and the SRP receptor; in the process of endoplasmic reticulum stress-induced pre-emptive quality control. Highly expressed in spleen, lung, liver, spleen and testis. Expressed at intermediate level in kidney. Weakly or not expressed in brain, heart and skeletal muscle.

It localises to the endoplasmic reticulum membrane. Functionally, functional component of endoplasmic reticulum-associated degradation (ERAD) for misfolded lumenal glycoproteins, but not that of misfolded nonglycoproteins. May act by forming a channel that allows the retrotranslocation of misfolded glycoproteins into the cytosol where they are ubiquitinated and degraded by the proteasome. May mediate the interaction between VCP and the misfolded glycoproteins. May be involved in endoplasmic reticulum stress-induced pre-emptive quality control, a mechanism that selectively attenuates the translocation of newly synthesized proteins into the endoplasmic reticulum and reroutes them to the cytosol for proteasomal degradation. The sequence is that of Derlin-3 from Mus musculus (Mouse).